Here is a 131-residue protein sequence, read N- to C-terminus: Fumarate reductase subunit C (131 aa).

3 consecutive transmembrane segments (helical) span residues Glu-30–Leu-50, Ile-61–Leu-81, and Ile-110–Phe-130.

This sequence belongs to the FrdC family. In terms of assembly, part of an enzyme complex containing four subunits: a flavoprotein (FrdA), an iron-sulfur protein (FrdB), and two hydrophobic anchor proteins (FrdC and FrdD).

It localises to the cell inner membrane. Functionally, two distinct, membrane-bound, FAD-containing enzymes are responsible for the catalysis of fumarate and succinate interconversion; fumarate reductase is used in anaerobic growth, and succinate dehydrogenase is used in aerobic growth. Anchors the catalytic components of the fumarate reductase complex to the cell inner membrane, binds quinones. The polypeptide is Fumarate reductase subunit C (Klebsiella pneumoniae (strain 342)).